We begin with the raw amino-acid sequence, 248 residues long: tRNA (guanine-N(1)-)-methyltransferase (248 aa).

S-adenosyl-L-methionine-binding positions include Gly-126 and 150–155 (LGDYVL). The segment at 224 to 248 (WRRTQQEERTRERRPDLWAAFDSED) is disordered. The span at 227–239 (TQQEERTRERRPD) shows a compositional bias: basic and acidic residues.

This sequence belongs to the RNA methyltransferase TrmD family. As to quaternary structure, homodimer.

It localises to the cytoplasm. The catalysed reaction is guanosine(37) in tRNA + S-adenosyl-L-methionine = N(1)-methylguanosine(37) in tRNA + S-adenosyl-L-homocysteine + H(+). Specifically methylates guanosine-37 in various tRNAs. This is tRNA (guanine-N(1)-)-methyltransferase from Micrococcus luteus (strain ATCC 4698 / DSM 20030 / JCM 1464 / CCM 169 / CCUG 5858 / IAM 1056 / NBRC 3333 / NCIMB 9278 / NCTC 2665 / VKM Ac-2230) (Micrococcus lysodeikticus).